The primary structure comprises 492 residues: Probable malate:quinone oxidoreductase 1 (492 aa).

This sequence belongs to the MQO family. FAD is required as a cofactor.

It carries out the reaction (S)-malate + a quinone = a quinol + oxaloacetate. It participates in carbohydrate metabolism; tricarboxylic acid cycle; oxaloacetate from (S)-malate (quinone route): step 1/1. The chain is Probable malate:quinone oxidoreductase 1 from Staphylococcus epidermidis (strain ATCC 35984 / DSM 28319 / BCRC 17069 / CCUG 31568 / BM 3577 / RP62A).